Here is a 522-residue protein sequence, read N- to C-terminus: Sugar carrier protein A (522 aa).

The Cytoplasmic portion of the chain corresponds to 1–22; the sequence is MAGGSLAPAGVAKERAEQYQGK. 12 consecutive transmembrane segments (helical) span residues 23–43, 87–107, 121–141, 144–164, 173–193, 205–225, 286–306, 322–342, 351–371, 384–404, 430–450, and 453–473; these read VTFA…IFGY, AFTS…GPIT, ISFL…MLLL, IMLG…LSEM, LNIM…MVNY, LSLG…LLLP, LVMA…IILF, ALYS…ISIA, FLLI…AIIL, SFSV…GWSW, AVNL…LCAF, and GIFL…YIFL. Residues 474–522 are Cytoplasmic-facing; it reads PETKGVPIEEMIFLWRKHWFWKKIVPGQPEVDDSRESMEMGEAVASRIK.

Belongs to the major facilitator superfamily. Sugar transporter (TC 2.A.1.1) family.

It is found in the membrane. The chain is Sugar carrier protein A (STA) from Ricinus communis (Castor bean).